A 479-amino-acid polypeptide reads, in one-letter code: MSMPSLKKYAAALFAVFLMGQSVAAHAQLPDFTPLVEAASPAVVNISTRQKVPNAVASNGGLSVPDLEGLPPMFREFFERSIPQQPRAPGGGGRQREAQSLGSGFIISKDGYILTNNHVVADADEIIVRLSDRSELEAKLIGTDPRSDVALLKVEANDLPTVKLGNSDNLKVGEWVLAIGSPFGFDHSVTAGIVSAKGRSLPNESYVPFIQTDVAINPGNSGGPLFNLDGEVVGINSQIFTRSGGFMGLSFAIPMSVAMDVADQLKASGKVSRGWLGVVIQEVNKDLAESFGLEKPAGALVAQVLEDGPAAKGGLQVGDVILSLDGKPIIMSADLPHLVGALKPGTKANLEIVREGSRKTLKVAVGTMPADDGDEATNDAAPSAERSSNRLGVSVAELTDEQKKALDLRGGVVIREVQDGPAALIGLRPGDVITHLNNQAITSAKNFTEVAQSLPKNRSVSMRVLRQGRASFITFKLAE.

The first 27 residues, 1–27, serve as a signal peptide directing secretion; that stretch reads MSMPSLKKYAAALFAVFLMGQSVAAHA. Catalysis depends on charge relay system residues His-118, Asp-148, and Ser-221. Residues 219 to 221 and 276 to 280 each bind substrate; these read GNS and LGVVI. 2 consecutive PDZ domains span residues 265–356 and 362–468; these read LKAS…VREG and KVAV…LRQG. Residues 368-390 form a disordered region; sequence MPADDGDEATNDAAPSAERSSNR.

Belongs to the peptidase S1C family.

The protein resides in the periplasm. It catalyses the reaction Acts on substrates that are at least partially unfolded. The cleavage site P1 residue is normally between a pair of hydrophobic residues, such as Val-|-Val.. Its function is as follows. Might be efficient in the degradation of transiently denatured and unfolded proteins which accumulate in the periplasm following stress conditions. This Pseudomonas fulva (strain 12-X) protein is Probable periplasmic serine endoprotease DegP-like.